Reading from the N-terminus, the 138-residue chain is MLIPKRVKYRRQHRPTRSGISKGGNRVTFGEYGIQALEPAYITNRQIESARIAINRHVKRGGKVWINIFPDRPLTQKPLGVRMGSGKGPVEKWVANIKPGRILFEMSYPDEATALEALRRAGQKLPCKVRIVKREDQL.

The segment covering 1–16 has biased composition (basic residues); the sequence is MLIPKRVKYRRQHRPT. Residues 1–23 form a disordered region; sequence MLIPKRVKYRRQHRPTRSGISKG.

The protein belongs to the universal ribosomal protein uL16 family. Part of the 50S ribosomal subunit.

In terms of biological role, binds 23S rRNA and is also seen to make contacts with the A and possibly P site tRNAs. The chain is Large ribosomal subunit protein uL16 from Corynebacterium glutamicum (strain R).